The primary structure comprises 42 residues: GHVPCGKDGRKCGYHADCCNCCLSGICKPSTSWTGCSTSTFN.

Disulfide bonds link C5–C19, C12–C22, C18–C27, and C21–C36.

It belongs to the conotoxin I1 superfamily. Expressed by the venom duct.

Its subcellular location is the secreted. In terms of biological role, iota-conotoxins bind to voltage-gated sodium channels (Nav) and act as agonists by shifting the voltage-dependence of activation to more hyperpolarized levels. Produces general excitatory symptoms. The chain is Iota-conotoxin-like R11.15 from Conus radiatus (Rayed cone).